A 164-amino-acid polypeptide reads, in one-letter code: Hoefavidin (164 aa).

An N-terminal signal peptide occupies residues 1 to 22 (MNKVLAIVLTITVAGFAQTAFA). One can recognise an Avidin-like domain in the interval 32-155 (KLLAGASNWV…GQDDFMQSVA (124 aa)). Biotin is bound by residues Asn42, Ser46, Tyr68, Asn70, and Gly76. Cysteines 77 and 108 form a disulfide. Biotin is bound by residues Ser110, Thr112, and Asp148.

It belongs to the avidin/streptavidin family. Exhibits a dynamic oligomeric assembly: the apo form exits as homooctamers, which dissociate into homodimers upon biotin binding. The X-ray structure of the intact hoefavidin reveals unique crystal packing generated by an octameric cylindrical structure wherein the C-terminal segments of each monomer are introduced into the entrance of the biotin-binding site of an adjacent non-canonical monomer.

The protein resides in the secreted. In terms of biological role, the exact role played by hoefavidin in the host organism is still obscure. Forms a strong non-covalent complex with biotin and 2-iminobiotin. This Hoeflea phototrophica (strain DSM 17068 / NCIMB 14078 / DFL-43) protein is Hoefavidin.